Here is a 48-residue protein sequence, read N- to C-terminus: uncharacterized protein (48 aa).

It belongs to the ELIP/psbS family.

It localises to the plastid. Its subcellular location is the chloroplast. Functionally, possible role in chlorophyll and/or carotenoid binding. This is an uncharacterized protein from Pyropia yezoensis (Susabi-nori).